The sequence spans 319 residues: MAQHFDFEKPILELEQKIAELQEFSKEKDINLSPEISKLMRRLVRLRKEIYGNLEPWQKVQIARHMERPNFYDYAPLLFEDFMEFKGDRLFADDKAIVGGIAIFQGIPVTVVSHIKGRGTKENIQRNFGMPHPEGYRKALRLMDQAEKFHRPILTFIDTPGAACDLEAEERGQGEAIARCLQAMAGYSVPIICTVIGEGGSGGALALGVGNKVLLLENSFYSVIAPESCASILWKDPGKAKEAASALKFTAQDLLELGIADGIIKEPLGGAHRSVERTAEEMKKTIAEALAELRELPPDELRTMRYEKLMNYGEFEEKA.

The 258-residue stretch at 35–292 folds into the CoA carboxyltransferase C-terminal domain; that stretch reads EISKLMRRLV…KKTIAEALAE (258 aa).

This sequence belongs to the AccA family. Acetyl-CoA carboxylase is a heterohexamer composed of biotin carboxyl carrier protein (AccB), biotin carboxylase (AccC) and two subunits each of ACCase subunit alpha (AccA) and ACCase subunit beta (AccD).

The protein localises to the cytoplasm. It catalyses the reaction N(6)-carboxybiotinyl-L-lysyl-[protein] + acetyl-CoA = N(6)-biotinyl-L-lysyl-[protein] + malonyl-CoA. It participates in lipid metabolism; malonyl-CoA biosynthesis; malonyl-CoA from acetyl-CoA: step 1/1. Functionally, component of the acetyl coenzyme A carboxylase (ACC) complex. First, biotin carboxylase catalyzes the carboxylation of biotin on its carrier protein (BCCP) and then the CO(2) group is transferred by the carboxyltransferase to acetyl-CoA to form malonyl-CoA. The sequence is that of Acetyl-coenzyme A carboxylase carboxyl transferase subunit alpha from Desulfitobacterium hafniense (strain DSM 10664 / DCB-2).